A 202-amino-acid polypeptide reads, in one-letter code: Putative pre-16S rRNA nuclease (202 aa).

2 disordered regions span residues 1-27 (MSGS…GVRI) and 170-202 (GCAA…SDER). Residues 9–20 (GDSRPGDSRPGD) show a composition bias toward basic and acidic residues.

The protein belongs to the YqgF nuclease family.

The protein resides in the cytoplasm. Could be a nuclease involved in processing of the 5'-end of pre-16S rRNA. The sequence is that of Putative pre-16S rRNA nuclease from Frankia casuarinae (strain DSM 45818 / CECT 9043 / HFP020203 / CcI3).